Reading from the N-terminus, the 406-residue chain is Outer membrane protein assembly factor BamB (406 aa).

The N-terminal stretch at 1 to 23 (MMKQVDMYKRVALIALMGMSLAG) is a signal peptide. A lipid anchor (N-palmitoyl cysteine) is attached at cysteine 24. Residue cysteine 24 is the site of S-diacylglycerol cysteine attachment.

The protein belongs to the BamB family. As to quaternary structure, part of the Bam complex.

It localises to the cell outer membrane. Part of the outer membrane protein assembly complex, which is involved in assembly and insertion of beta-barrel proteins into the outer membrane. This is Outer membrane protein assembly factor BamB from Xanthomonas campestris pv. campestris (strain ATCC 33913 / DSM 3586 / NCPPB 528 / LMG 568 / P 25).